The primary structure comprises 675 residues: Methionine--tRNA ligase (675 aa).

The 'HIGH' region motif lies at 15–25; sequence PYANGSIHLGH. Zn(2+) is bound by residues Cys-146, Cys-149, Cys-159, and Cys-162. The 'KMSKS' region motif lies at 332–336; that stretch reads KMSKS. Lys-335 is an ATP binding site. Positions 573 to 675 constitute a tRNA-binding domain; it reads DFAKVDMRIA…SGAQPGMQVK (103 aa).

Belongs to the class-I aminoacyl-tRNA synthetase family. MetG type 1 subfamily. In terms of assembly, homodimer. The cofactor is Zn(2+).

It localises to the cytoplasm. The enzyme catalyses tRNA(Met) + L-methionine + ATP = L-methionyl-tRNA(Met) + AMP + diphosphate. Its function is as follows. Is required not only for elongation of protein synthesis but also for the initiation of all mRNA translation through initiator tRNA(fMet) aminoacylation. This chain is Methionine--tRNA ligase, found in Yersinia pseudotuberculosis serotype O:1b (strain IP 31758).